Here is a 99-residue protein sequence, read N- to C-terminus: A-type ATP synthase subunit F (99 aa).

This sequence belongs to the V-ATPase F subunit family. Has multiple subunits with at least A(3), B(3), C, D, E, F, H, I and proteolipid K(x).

It is found in the cell membrane. Its function is as follows. Component of the A-type ATP synthase that produces ATP from ADP in the presence of a proton gradient across the membrane. The sequence is that of A-type ATP synthase subunit F from Methanococcus maripaludis (strain C7 / ATCC BAA-1331).